A 300-amino-acid chain; its full sequence is Protein SPEAR4 (300 aa).

Residues 1-10 (MCSKTSSVSY) show a composition bias toward polar residues. Positions 1 to 45 (MCSKTSSVSYGNREDDDNYSSLCPKKQKHNNGGKKRVPRRGPGVA) are disordered. Positions 25 to 39 (KKQKHNNGGKKRVPR) are enriched in basic residues. The SPL signature appears at 40–48 (RGPGVAELE). Positions 294-300 (IDLRLKL) match the EAR motif.

Interacts with SPL and SPEAR2. Expressed in leaves.

Its function is as follows. Adapter-like transcriptional repressor recruiting TPL/TPR coepressors to inhibit TCP transcription factors. May be involved in leaf development. The polypeptide is Protein SPEAR4 (Arabidopsis thaliana (Mouse-ear cress)).